Here is a 397-residue protein sequence, read N- to C-terminus: Kappa-carrageenase (397 aa).

Positions 1-25 (MKPISIVAFPIPAISMLLLSAVSQA) are cleaved as a signal peptide. The GH16 domain maps to 26-299 (ASMQPPIAKP…YVRTWVKVGN (274 aa)). Cys-98 and Cys-268 are oxidised to a cystine. Glu-163 functions as the Nucleophile in the catalytic mechanism. Asp-165 is a catalytic residue. Catalysis depends on Glu-168, which acts as the Proton donor. The 72-residue stretch at 316 to 387 (AVNSVQLSAA…TITVKTKNKG (72 aa)) folds into the BIG2 domain.

It belongs to the glycosyl hydrolase 16 family.

The protein resides in the periplasm. It carries out the reaction Endohydrolysis of (1-&gt;4)-beta-D-linkages between D-galactose 4-sulfate and 3,6-anhydro-D-galactose in kappa-carrageenans.. The protein is Kappa-carrageenase (cgkA) of Pseudoalteromonas carrageenovora (Alteromonas carrageenovora).